The primary structure comprises 478 residues: UDP-N-acetylmuramate--L-alanine ligase (478 aa).

112-118 contacts ATP; that stretch reads GTHGKTT.

This sequence belongs to the MurCDEF family.

It localises to the cytoplasm. It carries out the reaction UDP-N-acetyl-alpha-D-muramate + L-alanine + ATP = UDP-N-acetyl-alpha-D-muramoyl-L-alanine + ADP + phosphate + H(+). It functions in the pathway cell wall biogenesis; peptidoglycan biosynthesis. Cell wall formation. This chain is UDP-N-acetylmuramate--L-alanine ligase, found in Polynucleobacter asymbioticus (strain DSM 18221 / CIP 109841 / QLW-P1DMWA-1) (Polynucleobacter necessarius subsp. asymbioticus).